The following is a 461-amino-acid chain: Nucleobindin-1 (461 aa).

An N-terminal signal peptide occupies residues 1–26 (MPPSGPRGTLLLLPLLLLLLLRAVLA). The tract at residues 42-51 (TESPDTGLYY) is O-glycosylated at one site. Phosphoserine; by FAM20C is present on Ser86. Thr148 bears the Phosphothreonine; by FAM20C mark. Residues 150-218 (EARDLELLIQ…QQRRHREHPK (69 aa)) adopt a coiled-coil conformation. Residues 172–218 (HHEEFKRYEMLKEHERRRYLESLGEEQRKEAERKLEEQQRRHREHPK) mediate DNA binding. Residues 193–210 (SLGEEQRKEAERKLEEQQ) are compositionally biased toward basic and acidic residues. Positions 193–221 (SLGEEQRKEAERKLEEQQRRHREHPKVNV) are disordered. Residues 228-321 (LKEVWEELDG…VTLEEFLAST (94 aa)) are binds to GNAI2 and GNAI3. 2 EF-hand domains span residues 240-275 (PNRF…ELEK) and 292-327 (ERLR…KEFG). Positions 253, 255, 257, 264, 305, 307, 309, and 316 each coordinate Ca(2+). Residues 303–333 (NVDTNQDRLVTLEEFLASTQRKEFGDTGEGW) carry the GBA motif. Positions 341-407 (AYTEEELRRF…QRKQQQQQQQ (67 aa)) form a coiled coil. The tract at residues 368-461 (LSQETEALGR…LPEVEVPQHL (94 aa)) is disordered. Ser369 carries the post-translational modification Phosphoserine; by FAM20C. A compositionally biased stretch (basic and acidic residues) spans 437-461 (DQKEVDTSEKKLLERLPEVEVPQHL).

It belongs to the nucleobindin family. In terms of assembly, interacts (via GBA motif) with guanine nucleotide-binding protein G(i) alpha subunits GNAI1, GNAI2 and GNAI3 with higher affinity for GNAI1 and GNAI3 than for GNAI2. Preferentially interacts with inactive rather than active GNAI3. Interaction with GNAI3 is inhibited when NUCB1 binds calcium, probably due to a conformational change which renders the GBA motif inaccessible. In terms of processing, O-glycosylated. As to expression, expressed both in fetal and adult heart, lung, liver, kidney and brain, and in adult skeletal muscle, placenta and pancreas.

It localises to the golgi apparatus. The protein resides in the cis-Golgi network membrane. It is found in the cytoplasm. Its subcellular location is the secreted. Major calcium-binding protein of the Golgi which may have a role in calcium homeostasis. Acts as a non-receptor guanine nucleotide exchange factor which binds to and activates alpha subunits of guanine nucleotide-binding proteins (G proteins). This Homo sapiens (Human) protein is Nucleobindin-1 (NUCB1).